Reading from the N-terminus, the 592-residue chain is Calnexin (592 aa).

Residues 1-20 form the signal peptide; the sequence is MEGKWLLCMLLVLGTAIVEA. Residues 21–481 lie on the Lumenal side of the membrane; the sequence is HDGHDDDVID…QMIEAAEERP (461 aa). Serine 74 and aspartate 117 together coordinate Ca(2+). N6-acetyllysine is present on lysine 137. An intrachain disulfide couples cysteine 160 to cysteine 194. Positions 164, 166, 185, and 192 each coordinate an alpha-D-glucoside. Residues 260 to 345 are disordered; sequence GNLLNDMTPP…AEKPEDWDED (86 aa). Over residues 274 to 319 the composition is skewed to basic and acidic residues; that stretch reads REIEDPEDRKPEDWDERPKIPDPEAVKPDDWDEDAPAKIPDEEATK. Positions 276-409 are p domain (Extended arm); sequence IEDPEDRKPE…RKIPNPDFFE (134 aa). 5 tandem repeats follow at residues 278 to 290, 295 to 307, 314 to 326, 333 to 345, and 348 to 358. 4 X approximate repeats stretches follow at residues 278–345 and 348–405; these read DPED…WDED and GEWE…IPNP. A compositionally biased stretch (acidic residues) spans 323–345; sequence WLDDEPEYVPDPDAEKPEDWDED. The interaction with PPIB stretch occupies residues 326-359; the sequence is DEPEYVPDPDAEKPEDWDEDMDGEWEAPQIANPK. A disulfide bridge connects residues cysteine 360 and cysteine 366. 3 tandem repeats follow at residues 367 to 377, 381 to 391, and 395 to 405. Position 425 (glutamate 425) interacts with an alpha-D-glucoside. Aspartate 436 contributes to the Ca(2+) binding site. Residues 482 to 502 form a helical membrane-spanning segment; that stretch reads WLWVVYILTVALPVFLVILFC. 2 S-palmitoyl cysteine lipidation sites follow: cysteine 502 and cysteine 503. Residues 503–592 are Cytoplasmic-facing; that stretch reads CSGKKQTSAM…SPRNRKPRRE (90 aa). Residues 503 to 592 form a sufficient to mediate interaction with SGIP1 region; it reads CSGKKQTSAM…SPRNRKPRRE (90 aa). Residues 511 to 592 are disordered; sequence AMEYKKTDAP…SPRNRKPRRE (82 aa). A compositionally biased stretch (acidic residues) spans 525-547; it reads KEEEEEKEEEKDKGDEEEEGEEK. Serine 554 is modified (phosphoserine). Threonine 562 is subject to Phosphothreonine. Serine 564 is subject to Phosphoserine; by MAPK3. At serine 583 the chain carries Phosphoserine.

This sequence belongs to the calreticulin family. In terms of assembly, interacts with MAPK3/ERK1. Interacts with KCNH2. Associates with ribosomes. Interacts with SGIP1; involved in negative regulation of endocytosis. The palmitoylated form interacts with the ribosome-translocon complex component SSR1, promoting efficient folding of glycoproteins. Interacts with SERPINA2P/SERPINA2 and with the S and Z variants of SERPINA1. Interacts with PPIB. Interacts with ZNRF4. Interacts with SMIM22. Interacts with TMX2. Interacts with TMEM35A/NACHO and CHRNA7. Interacts with reticulophagy regulators RETREG2 and RETREG3. Interacts with DNM1L; may form part of a larger protein complex at the ER-mitochondrial interface during mitochondrial fission. Interacts with ADAM7. Phosphorylated at Ser-564 by MAPK3/ERK1. Phosphorylation by MAPK3/ERK1 increases its association with ribosomes. In terms of processing, palmitoylation by DHHC6 leads to the preferential localization to the perinuclear rough ER. It mediates the association of calnexin with the ribosome-translocon complex (RTC) which is required for efficient folding of glycosylated proteins. Post-translationally, ubiquitinated, leading to proteasomal degradation. Probably ubiquitinated by ZNRF4.

It localises to the endoplasmic reticulum membrane. The protein resides in the mitochondrion membrane. Its subcellular location is the melanosome membrane. Calcium-binding protein that interacts with newly synthesized monoglucosylated glycoproteins in the endoplasmic reticulum. It may act in assisting protein assembly and/or in the retention within the ER of unassembled protein subunits. It seems to play a major role in the quality control apparatus of the ER by the retention of incorrectly folded proteins. Associated with partial T-cell antigen receptor complexes that escape the ER of immature thymocytes, it may function as a signaling complex regulating thymocyte maturation. Additionally it may play a role in receptor-mediated endocytosis at the synapse. This Pongo abelii (Sumatran orangutan) protein is Calnexin (CANX).